Consider the following 274-residue polypeptide: 2-dehydro-3-deoxyphosphooctonate aldolase (274 aa).

This sequence belongs to the KdsA family.

It is found in the cytoplasm. It catalyses the reaction D-arabinose 5-phosphate + phosphoenolpyruvate + H2O = 3-deoxy-alpha-D-manno-2-octulosonate-8-phosphate + phosphate. It participates in carbohydrate biosynthesis; 3-deoxy-D-manno-octulosonate biosynthesis; 3-deoxy-D-manno-octulosonate from D-ribulose 5-phosphate: step 2/3. It functions in the pathway bacterial outer membrane biogenesis; lipopolysaccharide biosynthesis. The sequence is that of 2-dehydro-3-deoxyphosphooctonate aldolase from Legionella pneumophila (strain Lens).